The chain runs to 237 residues: Class B acid phosphatase (237 aa).

The first 23 residues, 1–23 (MRKTPLALSAVFLLLSLNQSAFA), serve as a signal peptide directing secretion. Catalysis depends on aspartate 69, which acts as the Nucleophile. 2 residues coordinate Mg(2+): aspartate 69 and aspartate 71. Aspartate 71 serves as the catalytic Proton donor. Residues 137–138 (TG) and lysine 177 contribute to the substrate site. Aspartate 192 contributes to the Mg(2+) binding site.

It belongs to the class B bacterial acid phosphatase family. Homotetramer. The cofactor is Mg(2+).

Its subcellular location is the periplasm. It catalyses the reaction a phosphate monoester + H2O = an alcohol + phosphate. Functionally, dephosphorylates several organic phosphate monoesters. Also has a phosphotransferase activity catalyzing the transfer of low-energy phosphate groups from organic phosphate monoesters to free hydroxyl groups of various organic compounds. In Rahnella sp. (strain Y9602), this protein is Class B acid phosphatase.